Reading from the N-terminus, the 253-residue chain is 5'/3'-nucleotidase SurE (253 aa).

Residues aspartate 8, aspartate 9, serine 39, and asparagine 92 each contribute to the a divalent metal cation site.

It belongs to the SurE nucleotidase family. A divalent metal cation is required as a cofactor.

The protein localises to the cytoplasm. It catalyses the reaction a ribonucleoside 5'-phosphate + H2O = a ribonucleoside + phosphate. The enzyme catalyses a ribonucleoside 3'-phosphate + H2O = a ribonucleoside + phosphate. The catalysed reaction is [phosphate](n) + H2O = [phosphate](n-1) + phosphate + H(+). Functionally, nucleotidase with a broad substrate specificity as it can dephosphorylate various ribo- and deoxyribonucleoside 5'-monophosphates and ribonucleoside 3'-monophosphates with highest affinity to 3'-AMP. Also hydrolyzes polyphosphate (exopolyphosphatase activity) with the preference for short-chain-length substrates (P20-25). Might be involved in the regulation of dNTP and NTP pools, and in the turnover of 3'-mononucleotides produced by numerous intracellular RNases (T1, T2, and F) during the degradation of various RNAs. This is 5'/3'-nucleotidase SurE from Shigella flexneri serotype 5b (strain 8401).